The following is an 896-amino-acid chain: MSSFIGWKKNSNSGGTPGASPTSSSPLNSTISNANSVSGLGPLGSISNTSSSSLSSSFQPIQIVNSNNNSPPLSSSSSSTSTYSTPNSSNDTIGKSSSSSVASAAAAGASSTSTYSSSSSLIDTSQFNNNYVGNIFGGQPINPNTEFGSSILNKFSKYLLNKGFNTEGIFKPHPELDNEIQNVKKNLIKDLSIGDMEQASLSTLTQNPLVIGEIMKQYLALLPEPLFSYQLYDSFLLTHSILSPTDRIWAYRFLLLYLPVGFRGAIKSVLGLLSRVHQCSESSKMNSESLAKIFSPVFLRPAEDMYYMKSDQSTLEEIVKLWIEEFDMISKPPTNPNPNSKVTILGTNNTLSQLQQQSNQHSSLPNISSLSSNLIQQQLQQQQQQQQQSHPTIGMSKITSSLSSSSLQVNLQTSPKSPQSPKLLLPTIPKDDQQQMTIVKQKPILSKPTPTTTPTLTPQTTNPPPVPASTLDNNNSNNNNNNNNNNSNNNNNNNNNNNNNNNNNNNITPNGSPLINKRLSIGGFALSPPGASTSFSSLSEQEVEDKVRKIKVSIDTMVSEQALLLIKNLLKSIEKEFNYNHIIKFSSIIRDAKKHMNESSEKQLSLTKANIREFIQEYPKPMSYNLLVSSIPKLDTTNFTEQEKKANDIKRASQVAADEISDYIYYFKLKISTFQLKEQVISTAQIFSKLKSILESPPPSLPTGSSWSDFENNSSNNNININNNINNSSSNNNNNNSSPNSSPLMGRLKTSNGLNSSSNSNVTPPTENQISADKATIRIIEVCSQEIKSRFGSMRSNLERVDINGAFEIGKHSRNVKAVLNDIYVQCKLIPPPDIKALPPGEDQLTTLRKALPPLFDRFVTQIDELTQHVFNNKASPEEITIIVDKLLFINRSLSM.

The disordered stretch occupies residues Met1–Ser97. Over residues Asn10 to Pro26 the composition is skewed to low complexity. Polar residues predominate over residues Leu27–Ser38. Composition is skewed to low complexity over residues Ser45–Ser57 and Asn65–Ser97. The Rho-GAP domain maps to Gln139–Ser330. Low complexity-rich tracts occupy residues Ile375–Pro391, Ser400–Thr427, Pro448–Thr460, and Asn473–Asn506. 2 disordered regions span residues Ile375–Leu514 and Leu701–Ile770. Residues Pro702–Glu711 are compositionally biased toward polar residues. Low complexity-rich tracts occupy residues Asn712–Pro743 and Ser751–Asn761.

It localises to the cytoplasm. Its function is as follows. Rho GTPase-activating protein involved in the signal transduction pathway. This Dictyostelium discoideum (Social amoeba) protein is Rho GTPase-activating protein gacM (gacM).